A 574-amino-acid polypeptide reads, in one-letter code: MANTPHGGVLKDLFARDLPRQSELEAEAQKLPALTLSERHLCDLELILNGGFSPLEGFLTEKDYNGVVENNRLADGALFSMPINLDVNQAEIDQLGLKAGARVTLRDFRDDRNLAILTVEDIYRPDKVNEAKKVFGSDDDTHPGVKYLFDTAKEFYVGGKLEAINRLEHYDFLDLRFTPSELRAHFNKLGWQKVVAFQTRNPMHRAHRELTVRAARSQQANVLIQPVVGLTKPGDIDHFTRVRVYKALLPRYPNGMAALALLPLAMRMGGPREALWHAIIRKNHGATHFIVGRDHAGPGKNKQGKDHYGPYDAQVLVQEHQEELGIKMVEFQAMIYLPDSDEYLPINEIPEGTRTLNISGTELRHRLRTGKDIPEWFSYPEVVKVLREENPLPAEKGFTVFMTGYQNSGKDQIARALQATLNQGGGRPVSMLLGENVRHELSPELGFTRKDRDLNIQRIAFVASELTKAGAAVIAAPIAPFEDARKAARDLVEKSGPFFLVHVATPLEYCEKTDRKGVYAAARNGEIKNFTGVDDPYEAPAKPDLVVDLEKQNVRSIVHQIVLLLESNGLLDRL.

Residues 1-170 (MANTPHGGVL…LEAINRLEHY (170 aa)) form an N-terminal region. The interval 171–395 (DFLDLRFTPS…LREENPLPAE (225 aa)) is catalytic. A sulfate-binding site is contributed by Q198. ATP contacts are provided by residues 198–201 (QTRN) and 292–295 (GRDH). Catalysis depends on residues T199, R200, and N201. Sulfate is bound at residue R200. Residue A296 participates in sulfate binding. M334 is a binding site for ATP. Positions 396–574 (KGFTVFMTGY…LESNGLLDRL (179 aa)) are allosteric regulation domain; adenylyl-sulfate kinase-like. Residues 435–438 (ENVR), R452, 478–479 (IA), and K516 contribute to the 3'-phosphoadenylyl sulfate site.

This sequence in the N-terminal section; belongs to the sulfate adenylyltransferase family. In the C-terminal section; belongs to the APS kinase family. In terms of assembly, homohexamer. Dimer of trimers.

Its subcellular location is the cytoplasm. It catalyses the reaction sulfate + ATP + H(+) = adenosine 5'-phosphosulfate + diphosphate. It participates in sulfur metabolism; hydrogen sulfide biosynthesis; sulfite from sulfate: step 1/3. Its activity is regulated as follows. Allosterically inhibited by 3'-phosphoadenosine 5'-phosphosulfate (PAPS). Its function is as follows. Catalyzes the first intracellular reaction of sulfate assimilation, forming adenosine-5'-phosphosulfate (APS) from inorganic sulfate and ATP. Plays an important role in sulfate activation as a component of the biosynthesis pathway of sulfur-containing amino acids. The protein is Sulfate adenylyltransferase of Gibberella zeae (strain ATCC MYA-4620 / CBS 123657 / FGSC 9075 / NRRL 31084 / PH-1) (Wheat head blight fungus).